The following is a 122-amino-acid chain: Large ribosomal subunit protein uL14 (122 aa).

The protein belongs to the universal ribosomal protein uL14 family. As to quaternary structure, part of the 50S ribosomal subunit. Forms a cluster with proteins L3 and L19. In the 70S ribosome, L14 and L19 interact and together make contacts with the 16S rRNA in bridges B5 and B8.

Binds to 23S rRNA. Forms part of two intersubunit bridges in the 70S ribosome. The chain is Large ribosomal subunit protein uL14 from Shewanella sp. (strain ANA-3).